Consider the following 84-residue polypeptide: Small ribosomal subunit protein uS17 (84 aa).

Belongs to the universal ribosomal protein uS17 family. Part of the 30S ribosomal subunit.

Functionally, one of the primary rRNA binding proteins, it binds specifically to the 5'-end of 16S ribosomal RNA. The sequence is that of Small ribosomal subunit protein uS17 from Buchnera aphidicola subsp. Cinara cedri (strain Cc).